The following is a 499-amino-acid chain: UDP-N-acetylmuramoylalanine--D-glutamate ligase (499 aa).

128–134 contributes to the ATP binding site; sequence GTNGKTT.

Belongs to the MurCDEF family.

The protein localises to the cytoplasm. It carries out the reaction UDP-N-acetyl-alpha-D-muramoyl-L-alanine + D-glutamate + ATP = UDP-N-acetyl-alpha-D-muramoyl-L-alanyl-D-glutamate + ADP + phosphate + H(+). Its pathway is cell wall biogenesis; peptidoglycan biosynthesis. In terms of biological role, cell wall formation. Catalyzes the addition of glutamate to the nucleotide precursor UDP-N-acetylmuramoyl-L-alanine (UMA). This Rhodococcus jostii (strain RHA1) protein is UDP-N-acetylmuramoylalanine--D-glutamate ligase.